The chain runs to 183 residues: Ribosome-recycling factor (183 aa).

It belongs to the RRF family.

Its subcellular location is the cytoplasm. Functionally, responsible for the release of ribosomes from messenger RNA at the termination of protein biosynthesis. May increase the efficiency of translation by recycling ribosomes from one round of translation to another. The protein is Ribosome-recycling factor of Mycoplasma mobile (strain ATCC 43663 / 163K / NCTC 11711) (Mesomycoplasma mobile).